The sequence spans 482 residues: 23S rRNA (uracil(1939)-C(5))-methyltransferase RlmD (482 aa).

The [4Fe-4S] cluster site is built by Cys85, Cys95, Cys98, and Cys177. S-adenosyl-L-methionine-binding residues include Gln285, Phe314, Asn319, Glu335, Asn370, and Asp391. Residue Cys438 is the Nucleophile of the active site.

The protein belongs to the class I-like SAM-binding methyltransferase superfamily. RNA M5U methyltransferase family. RlmD subfamily.

The catalysed reaction is uridine(1939) in 23S rRNA + S-adenosyl-L-methionine = 5-methyluridine(1939) in 23S rRNA + S-adenosyl-L-homocysteine + H(+). Catalyzes the formation of 5-methyl-uridine at position 1939 (m5U1939) in 23S rRNA. This is 23S rRNA (uracil(1939)-C(5))-methyltransferase RlmD from Acidovorax sp. (strain JS42).